The following is a 34-amino-acid chain: DDIT3 upstream open reading frame protein (34 aa).

Interacts with DDIT3 (isoform 1).

Its subcellular location is the nucleus. It is found in the cytoplasm. Its function is as follows. Product of the upstream open reading frame (uORF) of DDIT3/CHOP that is specifically produced in absence of stress, thereby preventing translation of downstream stress effector DDIT3/CHOP. The polypeptide is DDIT3 upstream open reading frame protein (Homo sapiens (Human)).